The sequence spans 567 residues: Probable E3 ubiquitin-protein ligase ARI8 (567 aa).

The tract at residues M1–G27 is disordered. Residues A18–G27 are compositionally biased toward acidic residues. The interval G124–E337 is TRIAD supradomain. Zn(2+) contacts are provided by C128, C131, C145, H147, C150, C153, C173, C178, C217, C222, C239, C241, C246, C249, H254, C259, C286, and C289. Residues C128–C178 form an RING-type 1 zinc finger. The segment at Q197 to C259 adopts an IBR-type zinc-finger fold. Residues C286 to C316 form an RING-type 2; atypical zinc finger. C299 is an active-site residue. Zn(2+) contacts are provided by C304, C308, C313, C316, H323, and C333. A disordered region spans residues D514 to H543. Over residues S521–S542 the composition is skewed to low complexity. The segment at D540 to R567 adopts a RanBP2-type zinc-finger fold.

This sequence belongs to the RBR family. Ariadne subfamily. Requires Zn(2+) as cofactor. Ubiquitous.

The catalysed reaction is [E2 ubiquitin-conjugating enzyme]-S-ubiquitinyl-L-cysteine + [acceptor protein]-L-lysine = [E2 ubiquitin-conjugating enzyme]-L-cysteine + [acceptor protein]-N(6)-ubiquitinyl-L-lysine.. It participates in protein modification; protein ubiquitination. In terms of biological role, might act as an E3 ubiquitin-protein ligase, or as part of E3 complex, which accepts ubiquitin from specific E2 ubiquitin-conjugating enzymes and then transfers it to substrates. The polypeptide is Probable E3 ubiquitin-protein ligase ARI8 (ARI8) (Arabidopsis thaliana (Mouse-ear cress)).